Reading from the N-terminus, the 842-residue chain is DNA topoisomerase-like protein cin-4 (842 aa).

The span at 1–26 (MSEEDRNVFTSIDKKGGGSKQMDDLN) shows a compositional bias: basic and acidic residues. Residues 1–50 (MSEEDRNVFTSIDKKGGGSKQMDDLNQKCPKRKTSKLKGIPKLEDANDAG) form a disordered region. Residues 314–783 (IPCLVDGLKP…TWQDLWITDL (470 aa)) enclose the Topo IIA-type catalytic domain.

It belongs to the type II topoisomerase family.

In terms of biological role, plays a role in the removal of cohesin from kinetochores on mitotic chromosomes and is required for centromere resolution. The polypeptide is DNA topoisomerase-like protein cin-4 (Caenorhabditis elegans).